The chain runs to 497 residues: ATP synthase subunit alpha 2 (497 aa).

ATP is bound at residue 167–174 (GERATGKT).

Belongs to the ATPase alpha/beta chains family. As to quaternary structure, F-type ATPases have 2 components, CF(1) - the catalytic core - and CF(0) - the membrane proton channel. CF(1) has five subunits: alpha(3), beta(3), gamma(1), delta(1), epsilon(1). CF(0) has four main subunits: a(1), b(1), b'(1) and c(9-12).

Its subcellular location is the cell inner membrane. The enzyme catalyses ATP + H2O + 4 H(+)(in) = ADP + phosphate + 5 H(+)(out). Functionally, produces ATP from ADP in the presence of a proton gradient across the membrane. The alpha chain is a regulatory subunit. In Cereibacter sphaeroides (strain ATCC 17023 / DSM 158 / JCM 6121 / CCUG 31486 / LMG 2827 / NBRC 12203 / NCIMB 8253 / ATH 2.4.1.) (Rhodobacter sphaeroides), this protein is ATP synthase subunit alpha 2.